The sequence spans 1575 residues: Mediator of RNA polymerase II transcription subunit 1 (1575 aa).

The interval 1–670 is interaction with the Mediator complex and THRA; sequence MKAQGETEDS…YGSSPLERQN (670 aa). Positions 16–590 are interaction with ESR1; sequence MSSLLERLHA…SIKDRHESVG (575 aa). 2 interaction with the Mediator complex regions span residues 108–212 and 215–390; these read FYVE…GYLT and SGGH…SLQG. Residues 405 to 644 are interaction with THRA; sequence PLILNMIRHQ…MAGNTKNHPM (240 aa). The interval 542–789 is interaction with VDR; that stretch reads PASSPGYGMT…TDILSDIAEE (248 aa). At Ser-588 the chain carries Phosphoserine. Positions 604-608 match the LXXLL motif 1 motif; sequence LTSLL. Disordered stretches follow at residues 609 to 706, 737 to 760, 791 to 818, 874 to 895, and 951 to 1564; these read QITG…QTED, HITP…SHPQ, SKLP…HSQS, SQSG…NDDF, and SGSQ…GEED. The span at 622-632 shows a compositional bias: pro residues; the sequence is PTPPHHTPPPV. Residues 622–701 are interaction with GATA1; sequence PTPPHHTPPP…SSRVPPDKPK (80 aa). An interaction with PPARGC1A and THRA region spans residues 622–701; sequence PTPPHHTPPP…SSRVPPDKPK (80 aa). The short motif at 645 to 649 is the LXXLL motif 2 element; the sequence is LMNLL. The span at 655–675 shows a compositional bias: polar residues; sequence QDFSTLYGSSPLERQNSSSGS. The interval 656–1066 is interaction with ESR1; that stretch reads DFSTLYGSSP…TPPIPKITIQ (411 aa). Ser-664 is subject to Phosphoserine. A compositionally biased stretch (basic and acidic residues) spans 696-706; it reads PPDKPKHQTED. Ser-795 carries the phosphoserine modification. Thr-805 carries the phosphothreonine modification. The segment covering 808–818 has biased composition (polar residues); sequence RDSSSSGHSQS. Positions 875 to 902 match the Integrase domain-binding motif (IBM) motif; that stretch reads QSGFGEEYFDESSQSGDNDDFKGFASQA. 3 positions are modified to phosphoserine: Ser-887, Ser-953, and Ser-955. A compositionally biased stretch (basic and acidic residues) spans 963 to 974; the sequence is LGKEKTQKRVKE. The span at 976 to 986 shows a compositional bias: gly residues; the sequence is NGTGASSGSGP. Residue Thr-1032 is modified to Phosphothreonine; by MAPK1 or MAPK3. Residues 1034–1051 show a composition bias toward low complexity; it reads PTSTGGSKSPGSSGRSQT. Residues Thr-1051 and Thr-1057 each carry the phosphothreonine modification. 2 stretches are compositionally biased toward low complexity: residues 1078–1094 and 1101–1152; these read SSHS…SSGS and SSSS…SQTG. Ser-1158 is subject to Phosphoserine. Over residues 1158-1184 the composition is skewed to polar residues; the sequence is SPITKHGLSSGSSSTKMKPQGKPSSLM. Residue Lys-1179 is modified to N6-acetyllysine. Over residues 1185 to 1197 the composition is skewed to low complexity; sequence NPSISKPNISPSH. Ser-1209 is modified (phosphoserine). Residue Thr-1217 is modified to Phosphothreonine. Low complexity-rich tracts occupy residues 1220-1258 and 1265-1295; these read SSKA…GSVS and SNSC…SKGK. Ser-1225 carries the post-translational modification Phosphoserine. Positions 1251 to 1423 are interaction with TP53; the sequence is SASSGSVSQK…KPGESGGDGL (173 aa). A phosphoserine mark is found at Ser-1304 and Ser-1349. Positions 1331–1352 are enriched in polar residues; sequence MGASTNSSNHPMSSKHNTSGGE. Residues 1354-1366 are compositionally biased toward basic and acidic residues; it reads QSKREKSDKDKSK. Phosphoserine is present on residues Ser-1405 and Ser-1435. Composition is skewed to polar residues over residues 1427–1442 and 1450–1484; these read IASS…SGST and PSHS…SPSS. Thr-1442 carries the phosphothreonine modification. Position 1459 is a phosphothreonine; by MAPK1 or MAPK3 (Thr-1459). A phosphoserine mark is found at Ser-1465, Ser-1467, Ser-1481, Ser-1483, and Ser-1484. Over residues 1498–1507 the composition is skewed to basic residues; the sequence is KHKKHKKEKK. Lys-1523 carries the N6-acetyllysine modification. Residues 1527–1545 show a composition bias toward polar residues; that stretch reads WSKSPISSDPTASVTNNPI.

It belongs to the Mediator complex subunit 1 family. As to quaternary structure, component of the Mediator complex, which is composed of MED1, MED4, MED6, MED7, MED8, MED9, MED10, MED11, MED12, MED13, MED13L, MED14, MED15, MED16, MED17, MED18, MED19, MED20, MED21, MED22, MED23, MED24, MED25, MED26, MED27, MED29, MED30, MED31, CCNC, CDK8 and CDC2L6/CDK11. The MED12, MED13, CCNC and CDK8 subunits form a distinct module termed the CDK8 module. Mediator containing the CDK8 module is less active than Mediator lacking this module in supporting transcriptional activation. Individual preparations of the Mediator complex lacking one or more distinct subunits have been variously termed ARC, CRSP, DRIP, PC2, SMCC and TRAP. This subunit specifically interacts with a number of nuclear receptors in a ligand-dependent fashion including AR, ESR1, ESR2, PPARA, PPARG, RORA, RXRA, RXRG, THRA, THRB and VDR. Interacts with CTNNB1, GABPA, GLI3, PPARGC1A and TP53. Interacts with GATA1 and YWHAH. Interacts with CLOCK; this interaction requires the presence of THRAP3. Interacts with CCAR1. Interacts with NR4A3. Interacts (via IBM motif) with PSIP1 (via IBD domain); phosphorylation increases its affinity for PSIP1. Interacts with USP22. Post-translationally, phosphorylated by MAPK1 or MAPK3 during G2/M phase which may enhance protein stability and promote entry into the nucleolus. Phosphorylation increases its interaction with PSIP1. As to expression, widely expressed in the adult, with high levels of expression in the liver, lung, intestinal mucosa, kidney cortex, thymic cortex, splenic follicle and seminiferous epithelium in testis. Also expressed in the adult heart, brain, spleen and skeletal muscle.

The protein resides in the nucleus. In terms of biological role, component of the Mediator complex, a coactivator involved in the regulated transcription of nearly all RNA polymerase II-dependent genes. Mediator functions as a bridge to convey information from gene-specific regulatory proteins to the basal RNA polymerase II transcription machinery. Mediator is recruited to promoters by direct interactions with regulatory proteins and serves as a scaffold for the assembly of a functional preinitiation complex with RNA polymerase II and the general transcription factors. Essential for embryogenesis, including development of the central nervous system, heart, liver and placenta and for erythropoiesis. Also required for normal transcriptional control of thyroid-stimulating hormone beta (TSHB) in the pituitary. Acts as a coactivator for GATA1-mediated transcriptional activation during erythroid differentiation of K562 erythroleukemia cells. The chain is Mediator of RNA polymerase II transcription subunit 1 (Med1) from Mus musculus (Mouse).